The following is a 312-amino-acid chain: Ribosomal RNA small subunit methyltransferase H (312 aa).

S-adenosyl-L-methionine is bound by residues 33 to 35 (AGH), aspartate 52, phenylalanine 79, aspartate 100, and glutamine 107.

This sequence belongs to the methyltransferase superfamily. RsmH family.

The protein resides in the cytoplasm. It carries out the reaction cytidine(1402) in 16S rRNA + S-adenosyl-L-methionine = N(4)-methylcytidine(1402) in 16S rRNA + S-adenosyl-L-homocysteine + H(+). Functionally, specifically methylates the N4 position of cytidine in position 1402 (C1402) of 16S rRNA. This Finegoldia magna (strain ATCC 29328 / DSM 20472 / WAL 2508) (Peptostreptococcus magnus) protein is Ribosomal RNA small subunit methyltransferase H.